We begin with the raw amino-acid sequence, 187 residues long: UPF0301 protein VC_0467 (187 aa).

Belongs to the UPF0301 (AlgH) family.

The chain is UPF0301 protein VC_0467 from Vibrio cholerae serotype O1 (strain ATCC 39315 / El Tor Inaba N16961).